The following is a 223-amino-acid chain: Thymidylate kinase (223 aa).

7–14 (GIDGAGKS) is a binding site for ATP.

The protein belongs to the thymidylate kinase family.

The enzyme catalyses dTMP + ATP = dTDP + ADP. Phosphorylation of dTMP to form dTDP in both de novo and salvage pathways of dTTP synthesis. The chain is Thymidylate kinase from Prosthecochloris aestuarii (strain DSM 271 / SK 413).